The following is a 149-amino-acid chain: Calmodulin-like protein 3 (149 aa).

EF-hand domains are found at residues 8–43 (EQIAEFKEAFSLFDKDGDGCITTQELGTVMRSLGQN), 44–79 (PTEAELQDMVNEIDKDGNGTVDFPEFLTMMSRKMKD), 81–116 (DSEEEIREAFRVFDKDGNGFVSAAELRHVMTRLGEK), and 117–149 (LSDEEVDEMIQAADTDGDGQVNYEEFVHMLVSK). Residues aspartate 21, aspartate 23, aspartate 25, cysteine 27, glutamate 32, aspartate 57, aspartate 59, asparagine 61, threonine 63, glutamate 68, aspartate 94, aspartate 96, asparagine 98, glutamate 105, aspartate 130, aspartate 132, aspartate 134, glutamine 136, and glutamate 141 each contribute to the Ca(2+) site.

Belongs to the calmodulin family. Interacts with MYO10, the interaction is calcium-dependent and essential for MYO10 function in filopodial extension.

May function as a specific light chain of unconventional myosin-10 (MYO10), also enhances MYO10 translation, possibly by acting as a chaperone for the emerging MYO10 heavy chain protein. May compete with calmodulin by binding, with different affinities, to cellular substrates. This is Calmodulin-like protein 3 (Calml3) from Rattus norvegicus (Rat).